A 311-amino-acid polypeptide reads, in one-letter code: Aspartate carbamoyltransferase catalytic subunit (311 aa).

The carbamoyl phosphate site is built by arginine 58 and threonine 59. L-aspartate is bound at residue lysine 86. Positions 108, 136, and 139 each coordinate carbamoyl phosphate. 2 residues coordinate L-aspartate: arginine 169 and arginine 223. Glycine 264 and proline 265 together coordinate carbamoyl phosphate.

This sequence belongs to the aspartate/ornithine carbamoyltransferase superfamily. ATCase family. Heterododecamer (2C3:3R2) of six catalytic PyrB chains organized as two trimers (C3), and six regulatory PyrI chains organized as three dimers (R2).

The enzyme catalyses carbamoyl phosphate + L-aspartate = N-carbamoyl-L-aspartate + phosphate + H(+). It functions in the pathway pyrimidine metabolism; UMP biosynthesis via de novo pathway; (S)-dihydroorotate from bicarbonate: step 2/3. Its function is as follows. Catalyzes the condensation of carbamoyl phosphate and aspartate to form carbamoyl aspartate and inorganic phosphate, the committed step in the de novo pyrimidine nucleotide biosynthesis pathway. The sequence is that of Aspartate carbamoyltransferase catalytic subunit from Acidiphilium cryptum (strain JF-5).